The sequence spans 666 residues: Protein SLY1 (666 aa).

4 repeat units span residues 106 to 142 (KENI…DLAQ), 220 to 257 (KGGP…DSLE), 436 to 474 (LDIL…QNVE), and 478 to 514 (KEND…DGSD). A 4 X approximate repeats region spans residues 106–514 (KENIDIIVND…QNKSLEDGSD (409 aa)).

This sequence belongs to the STXBP/unc-18/SEC1 family. In terms of assembly, interacts with SED5.

Its subcellular location is the cytoplasm. The protein localises to the membrane. Its function is as follows. Able to suppress the functional loss of YPT1. SLY1 is essential for cell viability. May interact indirectly, or directly with YPT1. In Saccharomyces cerevisiae (strain ATCC 204508 / S288c) (Baker's yeast), this protein is Protein SLY1 (SLY1).